A 619-amino-acid polypeptide reads, in one-letter code: MDELVKALERAGYLLTPSAYYLLVDHFKEGKFSLVELVKFAKSKGVFIIDGDLAYEFLQFLGLGVPQEIKESYISTGEEAEKTVESQETRASELEEGGVSQVSSGELQELKEESPEISTTEEEIGGLELVQSSISTGSEVEYNNGENGESVVVLDKYGYPILYAPEEIGEEKEYSKYEDVVIEWNPSVTPVQIEKNYEVKFDVRQVKLRPPKVKNGSGKEGEIIVEAYASLFKSRLSKLKRILRENPEISNVVDIGKLNYVSGDEEVTIIGLVNSKRETNRGLIFEVEDKTGIVKVFLPKDSEDYREAFKVLPDAVVAFKGFYSKKGIFFANKFYLPDVPLYRKQKPPLEEKVYAILISDIHVGSREFCEKAFLKFLEWLNGHVESKEEEEIVSRVKYLIIAGDVVDGIGIYPGQYSDLVIPDIFDQYEALANLLANVPEHITMFIGPGNHDAARPAIPQPEFYKEYAKPIYKLKNAIIISNPAVIRLHGRDFLIAHGRGIEDVVSFVPGLTHHKPGLPMVELLKMRHLAPTFGGKVPIAPDPEDLLVIEEVPDLVQMGHVHVYDAVVYRGVQLVNSATWQAQTEFQKMVNIVPTPAKVPVVDVESARVVKVLDFSGWC.

Positions 78–122 (EEAEKTVESQETRASELEEGGVSQVSSGELQELKEESPEISTTEE) are disordered. Basic and acidic residues predominate over residues 79–93 (EAEKTVESQETRASE).

It belongs to the DNA polymerase delta/II small subunit family. Heterodimer of a large subunit and a small subunit.

It carries out the reaction DNA(n) + a 2'-deoxyribonucleoside 5'-triphosphate = DNA(n+1) + diphosphate. The enzyme catalyses Exonucleolytic cleavage in the 3'- to 5'-direction to yield nucleoside 5'-phosphates.. In terms of biological role, possesses two activities: a DNA synthesis (polymerase) and an exonucleolytic activity that degrades single-stranded DNA in the 3' to 5' direction. Has a template-primer preference which is characteristic of a replicative DNA polymerase. This is DNA polymerase II small subunit (polB) from Pyrococcus abyssi (strain GE5 / Orsay).